The primary structure comprises 380 residues: Queuine tRNA-ribosyltransferase (380 aa).

Aspartate 93 serves as the catalytic Proton acceptor. Residues 93 to 97 (DSGGF), aspartate 147, glutamine 198, and glycine 225 contribute to the substrate site. An RNA binding region spans residues 256–262 (GVGLPSN). The active-site Nucleophile is the aspartate 275. Positions 280 to 284 (ARNGR) are RNA binding; important for wobble base 34 recognition. 4 residues coordinate Zn(2+): cysteine 313, cysteine 315, cysteine 318, and histidine 344.

This sequence belongs to the queuine tRNA-ribosyltransferase family. As to quaternary structure, homodimer. Within each dimer, one monomer is responsible for RNA recognition and catalysis, while the other monomer binds to the replacement base PreQ1. It depends on Zn(2+) as a cofactor.

It carries out the reaction 7-aminomethyl-7-carbaguanine + guanosine(34) in tRNA = 7-aminomethyl-7-carbaguanosine(34) in tRNA + guanine. Its pathway is tRNA modification; tRNA-queuosine biosynthesis. In terms of biological role, catalyzes the base-exchange of a guanine (G) residue with the queuine precursor 7-aminomethyl-7-deazaguanine (PreQ1) at position 34 (anticodon wobble position) in tRNAs with GU(N) anticodons (tRNA-Asp, -Asn, -His and -Tyr). Catalysis occurs through a double-displacement mechanism. The nucleophile active site attacks the C1' of nucleotide 34 to detach the guanine base from the RNA, forming a covalent enzyme-RNA intermediate. The proton acceptor active site deprotonates the incoming PreQ1, allowing a nucleophilic attack on the C1' of the ribose to form the product. After dissociation, two additional enzymatic reactions on the tRNA convert PreQ1 to queuine (Q), resulting in the hypermodified nucleoside queuosine (7-(((4,5-cis-dihydroxy-2-cyclopenten-1-yl)amino)methyl)-7-deazaguanosine). The protein is Queuine tRNA-ribosyltransferase of Clostridium perfringens (strain ATCC 13124 / DSM 756 / JCM 1290 / NCIMB 6125 / NCTC 8237 / Type A).